The chain runs to 200 residues: Peptidyl-tRNA hydrolase (200 aa).

Position 17 (Tyr-17) interacts with tRNA. Catalysis depends on His-22, which acts as the Proton acceptor. Residues Tyr-78, Asn-80, and Asn-126 each coordinate tRNA.

It belongs to the PTH family. Monomer.

The protein localises to the cytoplasm. The enzyme catalyses an N-acyl-L-alpha-aminoacyl-tRNA + H2O = an N-acyl-L-amino acid + a tRNA + H(+). In terms of biological role, hydrolyzes ribosome-free peptidyl-tRNAs (with 1 or more amino acids incorporated), which drop off the ribosome during protein synthesis, or as a result of ribosome stalling. Its function is as follows. Catalyzes the release of premature peptidyl moieties from peptidyl-tRNA molecules trapped in stalled 50S ribosomal subunits, and thus maintains levels of free tRNAs and 50S ribosomes. The protein is Peptidyl-tRNA hydrolase of Cutibacterium acnes (strain DSM 16379 / KPA171202) (Propionibacterium acnes).